The primary structure comprises 149 residues: Large ribosomal subunit protein bL9 (149 aa).

This sequence belongs to the bacterial ribosomal protein bL9 family.

Functionally, binds to the 23S rRNA. This Leptospira interrogans serogroup Icterohaemorrhagiae serovar copenhageni (strain Fiocruz L1-130) protein is Large ribosomal subunit protein bL9.